Reading from the N-terminus, the 257-residue chain is DNA-binding and peroxide stress resistance protein YaaA (257 aa).

Residues 35 to 66 (IGIARKLSAPQIGKLMSISDKLADLNATRFHD) carry the Helix-hairpin-helix motif.

The protein belongs to the UPF0246 family.

The protein localises to the cytoplasm. In terms of biological role, protects bacteria from neutrophil-related defense upon infection of mammals. Binds DNA. The polypeptide is DNA-binding and peroxide stress resistance protein YaaA (Klebsiella pneumoniae subsp. pneumoniae (strain HS11286)).